A 514-amino-acid polypeptide reads, in one-letter code: Cytochrome P450 monooxygenase MO6277 (514 aa).

The chain crosses the membrane as a helical span at residues L6 to Y26. C457 lines the heme pocket.

This sequence belongs to the cytochrome P450 family. Heme is required as a cofactor.

Its subcellular location is the membrane. It carries out the reaction polyporic acid + reduced [NADPH--hemoprotein reductase] + O2 = ascocorynin + oxidized [NADPH--hemoprotein reductase] + H2O + H(+). It participates in secondary metabolite biosynthesis. Functionally, cytochrome P450 monooxygenase that hydroxylates polyporic acid produced by the nonribosomal peptide synthetase acyN to produce the less toxic metabolite ascocorynin. The hydrophobic substrate polyporic acid might approach the active site from the membrane and, after hydroxylation into ascocorynin, leaves into the cytoplasm. MO6277 appears vital to avoid high-level accumulation of polyporic acid in the fungal membrane. In Ascocoryne sarcoides (Purple jellydisc fungus), this protein is Cytochrome P450 monooxygenase MO6277.